Here is a 96-residue protein sequence, read N- to C-terminus: Large ribosomal subunit protein eL21 (96 aa).

Residues 1 to 66 form a disordered region; sequence MPSSNGPLEG…FDGQTGTVEG (66 aa).

This sequence belongs to the eukaryotic ribosomal protein eL21 family. As to quaternary structure, part of the 50S ribosomal subunit. Interacts with protein L18 and binds the 5S rRNA. Has been cross-linked to L18.

Its function is as follows. This is one of 5 proteins that mediate the attachment of the 5S rRNA onto the large ribosomal subunit, stabilizing the orientation of adjacent RNA domains. The protein is Large ribosomal subunit protein eL21 (rpl21e) of Haloarcula marismortui (strain ATCC 43049 / DSM 3752 / JCM 8966 / VKM B-1809) (Halobacterium marismortui).